A 230-amino-acid polypeptide reads, in one-letter code: RING finger protein 141 (230 aa).

Residue Gly-2 is the site of N-myristoyl glycine attachment. The RING-type zinc-finger motif lies at 155–192; that stretch reads CCICMDGRADLILPCAHSFCQKCIDKWSDRHRNCPICR.

The protein resides in the membrane. Its function is as follows. May be involved in spermatogenesis. This Bos taurus (Bovine) protein is RING finger protein 141 (RNF141).